Consider the following 156-residue polypeptide: Translationally controlled tumor protein 2 (156 aa).

The region spanning 1–156 (MLVYQDILTG…LAYGLKEIKC (156 aa)) is the TCTP domain.

Belongs to the TCTP family. Expressed in stems, cauline leaves, minor veins of rosette leaves, roots, lateral root primordia, vascular tissues of petioles and inflorescences, base of siliques, papillae and ovules. Not detected in root meristems, anthers or seeds. Expressed in stomata, trichomes and root cortex.

It is found in the nucleus. The protein localises to the cytoplasm. In terms of biological role, regulates proliferation. Induces whole plant regeneration when expressed in heterologous systems. Involved in root growth and lateral root development, with a probable role in cell reprogramming. The long-distance transport of TCTP RNA and/or protein in plants may have an important role in regulation of growth and development. The polypeptide is Translationally controlled tumor protein 2 (Arabidopsis thaliana (Mouse-ear cress)).